Reading from the N-terminus, the 355-residue chain is Peptide chain release factor 1 (355 aa).

Glutamine 231 carries the N5-methylglutamine modification. Residues 280–291 (SERLAKESEARK) show a composition bias toward basic and acidic residues. Residues 280–303 (SERLAKESEARKSQVGSGDRSERI) form a disordered region.

It belongs to the prokaryotic/mitochondrial release factor family. In terms of processing, methylated by PrmC. Methylation increases the termination efficiency of RF1.

Its subcellular location is the cytoplasm. Peptide chain release factor 1 directs the termination of translation in response to the peptide chain termination codons UAG and UAA. This is Peptide chain release factor 1 from Campylobacter jejuni subsp. jejuni serotype O:6 (strain 81116 / NCTC 11828).